The chain runs to 374 residues: tRNA (guanine(26)-N(2))-dimethyltransferase (374 aa).

One can recognise a Trm1 methyltransferase domain in the interval 4–371; the sequence is IEIREGKASL…KEIDEIVNCI (368 aa). S-adenosyl-L-methionine is bound by residues Arg44, Arg69, Asp87, Asp113, and Ala114. Residues Cys244, Cys247, Cys261, and Cys264 each coordinate Zn(2+).

This sequence belongs to the class I-like SAM-binding methyltransferase superfamily. Trm1 family.

It catalyses the reaction guanosine(26) in tRNA + 2 S-adenosyl-L-methionine = N(2)-dimethylguanosine(26) in tRNA + 2 S-adenosyl-L-homocysteine + 2 H(+). Functionally, dimethylates a single guanine residue at position 26 of a number of tRNAs using S-adenosyl-L-methionine as donor of the methyl groups. The sequence is that of tRNA (guanine(26)-N(2))-dimethyltransferase from Sulfurisphaera tokodaii (strain DSM 16993 / JCM 10545 / NBRC 100140 / 7) (Sulfolobus tokodaii).